The chain runs to 232 residues: MENQPKLNSSKEVIAFLAERFPHCFSAEGEARPLKIGIFQDLVDRVAGEMNLSKTQLRSALRLYTSSWRYLYGVKPGATRVDLDGNPCGELDEQHVEHARKQLEEAKARVQAQRAEQQAKKREAAATAGEKEDAPRRERKPRPTTPRRKEGAERKPRAQKPVEKAPKTVKAPREEQHTPVSDISALTVGQALKVKAGQNAMDATVLEITKDGVRVQLNSGMSLIVRAEHLVF.

A disordered region spans residues 105-182; the sequence is EAKARVQAQR…REEQHTPVSD (78 aa). Positions 117–136 are enriched in basic and acidic residues; the sequence is QQAKKREAAATAGEKEDAPR. The span at 137–146 shows a compositional bias: basic residues; sequence RERKPRPTTP. Positions 147-177 are enriched in basic and acidic residues; it reads RRKEGAERKPRAQKPVEKAPKTVKAPREEQH.

It belongs to the ProQ family.

The protein localises to the cytoplasm. Functionally, RNA chaperone with significant RNA binding, RNA strand exchange and RNA duplexing activities. May regulate ProP activity through an RNA-based, post-transcriptional mechanism. This chain is RNA chaperone ProQ, found in Escherichia coli (strain K12).